The sequence spans 348 residues: Phosphoribosylformylglycinamidine cyclo-ligase (348 aa).

This sequence belongs to the AIR synthase family.

It localises to the cytoplasm. It carries out the reaction 2-formamido-N(1)-(5-O-phospho-beta-D-ribosyl)acetamidine + ATP = 5-amino-1-(5-phospho-beta-D-ribosyl)imidazole + ADP + phosphate + H(+). It participates in purine metabolism; IMP biosynthesis via de novo pathway; 5-amino-1-(5-phospho-D-ribosyl)imidazole from N(2)-formyl-N(1)-(5-phospho-D-ribosyl)glycinamide: step 2/2. The sequence is that of Phosphoribosylformylglycinamidine cyclo-ligase from Roseobacter denitrificans (strain ATCC 33942 / OCh 114) (Erythrobacter sp. (strain OCh 114)).